The following is a 1705-amino-acid chain: MIARILYFFLWSAAFLPELQCASQRTADALTTFPTSAFINGTDRKDSNQTSTSRIKRKTLSVDFAVPSLLRYYLALFIKRPLNGDCLSFNGCYTVRANLLMRCVPLQKTIAGLLDAKLAAMNVNRSSTGQLPYRQKRPVPKVLNLGLTSASRKSNQVVVEVGEEMVKTGCGGLHVYEDAPVVFLEMDLTRILEWWLGAEGGRLRVRLMPERKVQVPGKEDKYSAAIRASDARLFIQIASSERPSSTISRNPTVAPKYWNFSWIAEDELTFPEDPVSTSDCTSKAKSCDRRPDGYYPEFAWSLTSAEDSWAIDQTMVKTKASSQGWEEGRFLTVNSSALTGPWVLSPWFRAAHRPCGLDITVFLHPRQSGRYTVWLIERDKPPLALLTTEHPHVIGWAVVHLSLAARSKPFRISSSYSQPGEIETATYDPRYSTNCTTRSSQNVTLRGRYHCRGGREINVSQLCDFSIDCPQGDDEGEHCRQFLNGSYCSFGREDCGWQPVQGRGPQWRAHPSIPQSLRSSCPSPGALLAIDSQPKGQRGSAQVRSPLFFYPLRNAPCMVKFWVCGSSNGALSLWITENSTGPEGQRSLWNSTSEANMGKGWKLITLPLFGLVDLFYLQFSADISSSSGIAFAVDNFTLSMECFLETNGEFPPVAPISPTQALFTQSNENIKTTTTLYGGPGASTESVKWIFHTCGATGQDGPTPTQCSNSYRNTNVNVTVGTKGPFKGIQMWQVPETRKYRITAYGAAGGRSVLAVHKSHGVYMTGDFLLQKDELLYILVGQEGEDACPNMVPTMDRICREQQGPSINKTQLKGGGGGGGGGTYVFKVVNGVHIPLLIAAGGGGRGYSSQSETPEEVMDRDPSIPGRNGKSGTAGGGGGWNDSAPVPQGGRPLILGGQGGEPCQAMGWKTRGGFGGGGGACTAGGGGGGYRGGSAWHDNDPRKDGDDGTSYISPDGEMYLEPLKGMEGNGEVIINPVQNCSHCESGDCHETSEGMVCYCDEELTLAPDGVSCINSTELPLLPAQPSLSHLALGLSVGTSALIAALLLAVSGVMIMYRRKHTELQSIQLELQSPDCKLSKLRASTIMTDYNPNYCFGGKTASVNDLKEVPRRNISLTRGLGHGAFGEVYEGLAVGIPGEPSPMQVAVKTLPEVCSEQDELDFLMEALIISKFSHQNIVRCIGVSLQALPHFILLELMAGGDLKSFLRETRPRLEHPSSLTMVDLLNIARDIARGCQYLEENQFIHRDIAARNCLLTCKGPGRVAKIGDFGMARDIYRASYYRKGGRAMLPVKWMPPEAFMEGIFTSKTDTWSFGVLLWEIFSLGYMPYPSRSNQEVLEFVTNGGRMDPPKNCPGPVYRIMTQSWQHQPEDRPNFSTILERIDYCLQDPDVVNVPLPVEYGPIPEEEERVPMRPEDPSAPSLLVSPQGTEDVPSATHSAQSKKDGEAIHMANLSTDSKLPPVPPSQPHPHHHLQTPVVTAPVPASKPSSTTSNAQDGGHVNLGFMQAHSSEKESRNRKPTNLWNPTYGSWFLQQQQKRQQVQAQRQTSGPRIPGEGQEQVGRTVTVAEALGLQQQHKQQQYQQQLQRQQQQQQQQQQQQGLCRPLLPPPPPPAPTPLLLDSATLAPVPLYRLRRFPCGNIGYGYQEQGLPMEPMQGPQLPPPHPGQQRPISLTRASGPEDSRPLLVTMGTVQDSRLPKMEGHNATVL.

The first 21 residues, 1-21 (MIARILYFFLWSAAFLPELQC), serve as a signal peptide directing secretion. Topologically, residues 22 to 1035 (ASQRTADALT…SLSHLALGLS (1014 aa)) are extracellular. N-linked (GlcNAc...) asparagine glycosylation is found at Asn-40 and Asn-48. Positions 54 to 76 (RIKRKTLSVDFAVPSLLRYYLAL) are heparin-binding region. 10 N-linked (GlcNAc...) asparagine glycosylation sites follow: Asn-124, Asn-259, Asn-334, Asn-434, Asn-442, Asn-458, Asn-484, Asn-578, Asn-590, and Asn-635. The MAM domain occupies 486–644 (SYCSFGREDC…NFTLSMECFL (159 aa)). The cysteines at positions 694 and 707 are disulfide-linked. N-linked (GlcNAc...) asparagine glycosylation occurs at Asn-717. Cys-788 and Cys-799 are disulfide-bonded. 2 N-linked (GlcNAc...) asparagine glycosylation sites follow: Asn-808 and Asn-881. Residues 842–892 (GGGRGYSSQSETPEEVMDRDPSIPGRNGKSGTAGGGGGWNDSAPVPQGGRP) are disordered. Cysteines 903 and 921 form a disulfide. A glycan (N-linked (GlcNAc...) asparagine) is linked at Asn-979. Disulfide bonds link Cys-980-Cys-988 and Cys-983-Cys-997. The interval 980–1016 (CSHCESGDCHETSEGMVCYCDEELTLAPDGVSCINST) is EGF-like. An N-linked (GlcNAc...) asparagine glycan is attached at Asn-1014. Residues 1036–1056 (VGTSALIAALLLAVSGVMIMY) traverse the membrane as a helical segment. Residues 1057-1705 (RRKHTELQSI…KMEGHNATVL (649 aa)) lie on the Cytoplasmic side of the membrane. One can recognise a Protein kinase domain in the interval 1113–1389 (ISLTRGLGHG…IDYCLQDPDV (277 aa)). ATP is bound by residues 1119–1127 (LGHGAFGEV) and Lys-1147. The Proton acceptor role is filled by Asp-1246. Disordered regions lie at residues 1395–1499 (PVEY…GHVN), 1505–1524 (AHSS…WNPT), 1532–1557 (QQQK…GQEQ), 1588–1613 (QQQQ…PAPT), and 1646–1681 (GLPM…DSRP). Residues 1484–1493 (KPSSTTSNAQ) show a composition bias toward polar residues. Low complexity-rich tracts occupy residues 1532 to 1544 (QQQK…AQRQ) and 1588 to 1602 (QQQQ…LCRP). Over residues 1603 to 1613 (LLPPPPPPAPT) the composition is skewed to pro residues.

Belongs to the protein kinase superfamily. Tyr protein kinase family. Insulin receptor subfamily. As to quaternary structure, homodimer; homodimerizes upon binding to alkal ligands (alkal1, alkal2a or alkal2b). In terms of tissue distribution, highly expressed in the developing central nervous system: highly expressed in brain, with much lower expression in heart, caudal fin and testis.

Its subcellular location is the cell membrane. It carries out the reaction L-tyrosyl-[protein] + ATP = O-phospho-L-tyrosyl-[protein] + ADP + H(+). Its activity is regulated as follows. Inhibited by ALK inhibitor TAE684. Receptor tyrosine kinase required for neurogenesis in the developing central nervous system. Following activation by alkal ligands (alkal1, alkal2a or alkal2b) at the cell surface, transduces an extracellular signal into an intracellular response. Ligand-binding to the extracellular domain induces tyrosine kinase activation, resulting in the activation of the mitogen-activated protein kinase (MAPK) pathway. Phosphorylates almost exclusively at the first tyrosine of the Y-x-x-x-Y-Y motif. In Danio rerio (Zebrafish), this protein is ALK tyrosine kinase receptor.